The sequence spans 154 residues: Phospholipase A2 OS1 (154 aa).

Residues 1–27 form the signal peptide; the sequence is MHPAHLLVLLAVCVSLLGAARIPPLPL. 7 disulfide bridges follow: cysteine 38–cysteine 104, cysteine 54–cysteine 153, cysteine 56–cysteine 72, cysteine 71–cysteine 132, cysteine 78–cysteine 125, cysteine 88–cysteine 118, and cysteine 111–cysteine 123. Glycine 57 and glycine 59 together coordinate Ca(2+). The active site involves histidine 75. Aspartate 76 serves as a coordination point for Ca(2+). Residue aspartate 126 is part of the active site.

Belongs to the phospholipase A2 family. Group I subfamily. D49 sub-subfamily. As to quaternary structure, monomer. Ca(2+) serves as cofactor. As to expression, expressed by the venom gland.

It is found in the secreted. The enzyme catalyses a 1,2-diacyl-sn-glycero-3-phosphocholine + H2O = a 1-acyl-sn-glycero-3-phosphocholine + a fatty acid + H(+). Its function is as follows. Snake venom phospholipase A2 (PLA2) that has a low specific activity on phospholipid substrates, and is neither neurotoxic, nor myotoxic. Induces endothelial cell migration which is mediated, at least in part, by its hydrolytic products. Shows antimalarial activity, but is not able to potently inhibit HIV-1 replication. Binds in a calcium-independent fashion with very high affinity to a muscle-type (M-type) PLA2 receptor, but is a very poor ligand for neuronal-type (N-type) receptors. PLA2 catalyzes the calcium-dependent hydrolysis of the 2-acyl groups in 3-sn-phosphoglycerides. In Oxyuranus scutellatus scutellatus (Australian taipan), this protein is Phospholipase A2 OS1.